A 262-amino-acid chain; its full sequence is Type III pantothenate kinase (262 aa).

Aspartate 9–lysine 16 is a binding site for ATP. Residues tyrosine 103 and glycine 110–arginine 113 each bind substrate. The Proton acceptor role is filled by aspartate 112. Position 134 (aspartate 134) interacts with K(+). Position 137 (threonine 137) interacts with ATP. Threonine 190 is a binding site for substrate.

The protein belongs to the type III pantothenate kinase family. As to quaternary structure, homodimer. Requires NH4(+) as cofactor. It depends on K(+) as a cofactor.

It localises to the cytoplasm. The enzyme catalyses (R)-pantothenate + ATP = (R)-4'-phosphopantothenate + ADP + H(+). Its pathway is cofactor biosynthesis; coenzyme A biosynthesis; CoA from (R)-pantothenate: step 1/5. Its function is as follows. Catalyzes the phosphorylation of pantothenate (Pan), the first step in CoA biosynthesis. The protein is Type III pantothenate kinase of Nitratidesulfovibrio vulgaris (strain DSM 19637 / Miyazaki F) (Desulfovibrio vulgaris).